A 606-amino-acid chain; its full sequence is Acetylcholinesterase (606 aa).

Positions Met-1–Ala-28 are cleaved as a signal peptide. A disulfide bridge connects residues Cys-98 and Cys-125. Ser-231 functions as the Acyl-ester intermediate in the catalytic mechanism. Cysteines 285 and 296 form a disulfide. An N-linked (GlcNAc...) asparagine glycan is attached at Asn-289. The Charge relay system role is filled by Glu-358. Residue Asn-374 is glycosylated (N-linked (GlcNAc...) asparagine). The cysteines at positions 433 and 552 are disulfide-linked. His-471 serves as the catalytic Charge relay system. An N-linked (GlcNAc...) asparagine glycan is attached at Asn-484.

The protein belongs to the type-B carboxylesterase/lipase family. Isoform S is monomeric. Isoform T can form oligomers, including collagen-tailed forms. In terms of processing, the N-terminus is blocked. In terms of tissue distribution, liver and muscle contain both isoform T and isoform S. Venom gland predominantly contains isoform S.

It localises to the synapse. The protein resides in the secreted. The protein localises to the cell membrane. It carries out the reaction acetylcholine + H2O = choline + acetate + H(+). Inhibited by active site inhibitors: edrophonium, trimethyl-(m-acetamidopheny1)-ammonium iodide, and trimethyl-(p-acetarnidopheny1)-ammonium iodide. Inhibited by both active and peripheral site inhibitors: decamethonium, and BW284c51. Inhibited by peripheral site inhibitors: snake acetylcholinesterase fasciculin-2, propidium, gallamine, D-tubocurarine, and tacrine. Also inhibited by antibodies Elec410 and Fab410. Functionally, in muscle, it terminates signal transduction at the neuromuscular junction by rapid hydrolysis of the acetylcholine released into the synaptic cleft. In liver, its function is unclear: it could serve as a safeguard against any diffusion of acetylcholine from synapses into the circulation. In venom, its toxic role is unclear: it could result in less musculatory control by rapidly hydrolyzing acetylcholine, or that it works synergistically with alkaline phosphatase (ALP) in paralyzing prey through hypotension. The chain is Acetylcholinesterase (ACHE) from Bungarus fasciatus (Banded krait).